The following is a 165-amino-acid chain: LOB domain-containing protein 21 (165 aa).

In terms of domain architecture, LOB spans 10–111; the sequence is SSCAACKLLK…HDLAVARTRL (102 aa).

This sequence belongs to the LOB domain-containing protein family.

The sequence is that of LOB domain-containing protein 21 (LBD21) from Arabidopsis thaliana (Mouse-ear cress).